We begin with the raw amino-acid sequence, 592 residues long: Syntaxin-binding protein 3 (592 aa).

Residues 1 to 255 (MAPPVAERGL…STVLHELTFQ (255 aa)) are mediates interaction with DOC2B.

Belongs to the STXBP/unc-18/SEC1 family. In terms of assembly, interacts with DOC2B; the interaction is direct, occurs at the cell membrane, excludes interaction with STX4 and regulates glucose-stimulated insulin secretion. Interacts with STX4. Post-translationally, phosphorylated by PKC in platelets in response to thrombin stimulation; phosphorylation inhibits binding to STX4. In terms of tissue distribution, megakaryocytes and platelets.

It localises to the cytoplasm. Its subcellular location is the cytosol. The protein resides in the cell membrane. Its function is as follows. Together with STX4 and VAMP2, may play a role in insulin-dependent movement of GLUT4 and in docking/fusion of intracellular GLUT4-containing vesicles with the cell surface in adipocytes. This is Syntaxin-binding protein 3 (STXBP3) from Homo sapiens (Human).